The sequence spans 51 residues: Large ribosomal subunit protein eL39 (51 aa).

Over residues Met-1–Asn-19 the composition is skewed to basic residues. A disordered region spans residues Met-1–Pro-23.

Belongs to the eukaryotic ribosomal protein eL39 family.

This Methanosarcina mazei (strain ATCC BAA-159 / DSM 3647 / Goe1 / Go1 / JCM 11833 / OCM 88) (Methanosarcina frisia) protein is Large ribosomal subunit protein eL39.